The sequence spans 381 residues: Putative F-box protein At4g17200 (381 aa).

The F-box domain occupies 1–47 (MTTMSDLSPDLVGEILTRVPMTSLISVRCTCKMWNALSKEGIFFKAA).

The protein is Putative F-box protein At4g17200 of Arabidopsis thaliana (Mouse-ear cress).